The sequence spans 336 residues: Peroxidase 72 (336 aa).

The signal sequence occupies residues 1–23 (MAKSLNILIAALSLIAFSPFCLC). Disulfide bonds link Cys-42/Cys-122, Cys-75/Cys-80, Cys-128/Cys-329, and Cys-207/Cys-239. Catalysis depends on His-73, which acts as the Proton acceptor. Residues Asp-74, Val-77, Gly-79, Asp-81, and Ser-83 each contribute to the Ca(2+) site. Pro-170 lines the substrate pocket. N-linked (GlcNAc...) asparagine glycosylation occurs at Asn-173. Heme b is bound at residue His-200. Thr-201 is a binding site for Ca(2+). An N-linked (GlcNAc...) asparagine glycan is attached at Asn-216. Residues Asp-252, Thr-255, and Asp-260 each contribute to the Ca(2+) site.

This sequence belongs to the peroxidase family. Classical plant (class III) peroxidase subfamily. The cofactor is heme b. It depends on Ca(2+) as a cofactor. Slightly expressed in roots.

It is found in the secreted. It carries out the reaction 2 a phenolic donor + H2O2 = 2 a phenolic radical donor + 2 H2O. Functionally, removal of H(2)O(2), oxidation of toxic reductants, biosynthesis and degradation of lignin, suberization, auxin catabolism, response to environmental stresses such as wounding, pathogen attack and oxidative stress. These functions might be dependent on each isozyme/isoform in each plant tissue. In Arabidopsis thaliana (Mouse-ear cress), this protein is Peroxidase 72 (PER72).